Here is a 156-residue protein sequence, read N- to C-terminus: Small ribosomal subunit protein uS7 (156 aa).

Belongs to the universal ribosomal protein uS7 family. Part of the 30S ribosomal subunit. Contacts proteins S9 and S11.

Functionally, one of the primary rRNA binding proteins, it binds directly to 16S rRNA where it nucleates assembly of the head domain of the 30S subunit. Is located at the subunit interface close to the decoding center, probably blocks exit of the E-site tRNA. This is Small ribosomal subunit protein uS7 from Desulfitobacterium hafniense (strain DSM 10664 / DCB-2).